Reading from the N-terminus, the 224-residue chain is Endoplasmic reticulum vesicle protein 25 (224 aa).

A signal peptide spans 1 to 25; it reads MIPPRSLGSTAALLLVLLFTTLASA. Residues 26–190 are Lumenal-facing; sequence IKFDLPSNAH…ADTNLSTNMR (165 aa). In terms of domain architecture, GOLD spans 38-131; it reads TKCIWNYALS…IPVVTIDLDV (94 aa). A helical membrane pass occupies residues 191–211; sequence VTNFAILTLIALIALGVWQVF. At 212-224 the chain is on the cytoplasmic side; sequence HLRGFFKRKYLID.

This sequence belongs to the EMP24/GP25L family.

The protein resides in the endoplasmic reticulum membrane. It is found in the golgi apparatus membrane. In terms of biological role, constituent of COPII-coated endoplasmic reticulum-derived transport vesicles. Required for efficient transport of a subset of secretory proteins to the Golgi. Facilitates retrograde transport from the Golgi to the endoplasmic reticulum. This Mycosarcoma maydis (Corn smut fungus) protein is Endoplasmic reticulum vesicle protein 25 (ERV25).